The primary structure comprises 80 residues: Large ribosomal subunit protein uL29 (80 aa).

The protein belongs to the universal ribosomal protein uL29 family.

The protein is Large ribosomal subunit protein uL29 (rpmC) of Mycobacterium leprae (strain TN).